Here is a 346-residue protein sequence, read N- to C-terminus: Serpentine receptor class gamma-20 (346 aa).

7 helical membrane passes run Val27–Leu47, Phe69–Leu89, Pro106–Phe128, Ile157–Leu177, Ile212–Leu232, Thr254–Ile274, and Leu279–Leu299.

This sequence belongs to the nematode receptor-like protein srg family.

The protein localises to the membrane. The chain is Serpentine receptor class gamma-20 (srg-20) from Caenorhabditis elegans.